A 280-amino-acid polypeptide reads, in one-letter code: Diaminopimelate epimerase (280 aa).

Substrate is bound by residues Asn-13 and Asn-64. Cys-73 acts as the Proton donor in catalysis. Substrate contacts are provided by residues Gly-74–Asn-75, Asn-164, Asn-197, and Glu-215–Arg-216. The Proton acceptor role is filled by Cys-224. Substrate is bound at residue Gly-225–Thr-226.

The protein belongs to the diaminopimelate epimerase family. Homodimer.

It is found in the cytoplasm. The enzyme catalyses (2S,6S)-2,6-diaminopimelate = meso-2,6-diaminopimelate. The protein operates within amino-acid biosynthesis; L-lysine biosynthesis via DAP pathway; DL-2,6-diaminopimelate from LL-2,6-diaminopimelate: step 1/1. Catalyzes the stereoinversion of LL-2,6-diaminopimelate (L,L-DAP) to meso-diaminopimelate (meso-DAP), a precursor of L-lysine and an essential component of the bacterial peptidoglycan. This chain is Diaminopimelate epimerase, found in Leptospira biflexa serovar Patoc (strain Patoc 1 / Ames).